Reading from the N-terminus, the 441-residue chain is ATP-dependent protease ATPase subunit HslU (441 aa).

ATP contacts are provided by residues Ile18 and Gly60–Glu65. A disordered region spans residues Ile131–Arg158. The segment covering Arg140–Ser152 has biased composition (basic and acidic residues). Asp254, Glu320, and Arg392 together coordinate ATP.

Belongs to the ClpX chaperone family. HslU subfamily. A double ring-shaped homohexamer of HslV is capped on each side by a ring-shaped HslU homohexamer. The assembly of the HslU/HslV complex is dependent on binding of ATP.

The protein resides in the cytoplasm. Its function is as follows. ATPase subunit of a proteasome-like degradation complex; this subunit has chaperone activity. The binding of ATP and its subsequent hydrolysis by HslU are essential for unfolding of protein substrates subsequently hydrolyzed by HslV. HslU recognizes the N-terminal part of its protein substrates and unfolds these before they are guided to HslV for hydrolysis. In Chromohalobacter salexigens (strain ATCC BAA-138 / DSM 3043 / CIP 106854 / NCIMB 13768 / 1H11), this protein is ATP-dependent protease ATPase subunit HslU.